A 287-amino-acid polypeptide reads, in one-letter code: NAD kinase (287 aa).

Catalysis depends on Asp-56, which acts as the Proton acceptor. NAD(+) is bound by residues 56 to 57 (DG), Arg-61, 128 to 129 (ND), and Asp-156.

The protein belongs to the NAD kinase family. The cofactor is a divalent metal cation.

It is found in the cytoplasm. The enzyme catalyses NAD(+) + ATP = ADP + NADP(+) + H(+). Its function is as follows. Involved in the regulation of the intracellular balance of NAD and NADP, and is a key enzyme in the biosynthesis of NADP. Catalyzes specifically the phosphorylation on 2'-hydroxyl of the adenosine moiety of NAD to yield NADP. This chain is NAD kinase, found in Thermomicrobium roseum (strain ATCC 27502 / DSM 5159 / P-2).